The chain runs to 443 residues: Structure-specific endonuclease subunit SLX1 homolog (443 aa).

The disordered stretch occupies residues 1-27; it reads METFILSSDSDDDSGPPPSKRRTIEGI. Residues 171–258 form the GIY-YIG domain; the sequence is EFYGVYCLIS…PLVSKSLKEK (88 aa). An SLX1-type zinc finger spans residues 340 to 395; sequence CRICGKDIEKLWSLVRCISATCPSHFHSKCLSENGLKLKNEHVDHVYPLKANCPTC.

The protein belongs to the SLX1 family. In terms of assembly, forms a heterodimer with him-18/slx-4. It depends on a divalent metal cation as a cofactor.

It is found in the nucleus. Its function is as follows. Catalytic subunit of a heterodimeric structure-specific endonuclease that resolves DNA secondary structures generated during DNA repair and recombination. Has endonuclease activity towards branched DNA substrates, introducing single-strand cuts in duplex DNA close to junctions with ss-DNA (Potential). Has a preference for replication forks over 5' flap structures or Holliday junctions and shows much lower activity toward 3' flap structures. Required for proper crossover distribution through inhibition of crossover formation at the central region of chromosomes. This chain is Structure-specific endonuclease subunit SLX1 homolog, found in Caenorhabditis elegans.